Reading from the N-terminus, the 128-residue chain is Small ribosomal subunit protein bS6 (128 aa).

This sequence belongs to the bacterial ribosomal protein bS6 family.

In terms of biological role, binds together with bS18 to 16S ribosomal RNA. The polypeptide is Small ribosomal subunit protein bS6 (Thermotoga petrophila (strain ATCC BAA-488 / DSM 13995 / JCM 10881 / RKU-1)).